A 423-amino-acid chain; its full sequence is MSASAVYVLDLKGKVLICRNYRGDVDMSEVEHFMPILMEKEEEGMLSPILAHGGVRFMWIKHNNLYLVATSKKNACVSLVFSFLYKVVQVFSEYFKELEEESIRDNFVIIYELLDELMDFGYPQTTDSKILQEYITQEGHKLETGAPRPPATVTNAVSWRSEGIKYRKNEVFLDVIEAVNLLVSANGNVLRSEIVGSIKMRVFLSGMPELRLGLNDKVLFDNTGRGKSKSVELEDVKFHQCVRLSRFENDRTISFIPPDGEFELMSYRLNTHVKPLIWIESVIEKHSHSRIEYMVKAKSQFKRRSTANNVEIHIPVPNDADSPKFKTTVGSVKWVPENSEIVWSIKSFPGGKEYLMRAHFGLPSVEAEDKEGKPPISVKFEIPYFTTSGIQVRYLKIIEKSGYQALPWVRYITQNGDYQLRTQ.

At serine 2 the chain carries N-acetylserine. Residues threonine 152, threonine 154, and threonine 223 each carry the phosphothreonine modification. In terms of domain architecture, MHD spans lysine 168–arginine 421.

Belongs to the adaptor complexes medium subunit family. In terms of assembly, adaptor protein complex 1 (AP-1) is a heterotetramer composed of two large adaptins (gamma-type subunit AP1G1 and beta-type subunit AP1B1), a medium adaptin (mu-type subunit AP1M1 or AP1M2) and a small adaptin (sigma-type subunit AP1S1 or AP1S2 or AP1S3). Interacts with MARCHF11. Post-translationally, phosphorylation of membrane-bound AP1M1/AP1M2 increases its affinity for sorting signals.

The protein localises to the cytoplasmic vesicle. It localises to the clathrin-coated vesicle membrane. It is found in the golgi apparatus. In terms of biological role, subunit of clathrin-associated adaptor protein complex 1 that plays a role in protein sorting in the trans-Golgi network (TGN) and endosomes. The AP complexes mediate the recruitment of clathrin to membranes and the recognition of sorting signals within the cytosolic tails of transmembrane cargo molecules. This Rattus norvegicus (Rat) protein is AP-1 complex subunit mu-1.